Here is a 217-residue protein sequence, read N- to C-terminus: Small ribosomal subunit protein uS3 (217 aa).

A KH type-2 domain is found at 38 to 106 (IRNFIKKELA…QVHINIIEIK (69 aa)).

Belongs to the universal ribosomal protein uS3 family. In terms of assembly, part of the 30S ribosomal subunit. Forms a tight complex with proteins S10 and S14.

Binds the lower part of the 30S subunit head. Binds mRNA in the 70S ribosome, positioning it for translation. This Streptococcus suis (strain 98HAH33) protein is Small ribosomal subunit protein uS3.